A 169-amino-acid polypeptide reads, in one-letter code: Large ribosomal subunit protein uL10 (169 aa).

This sequence belongs to the universal ribosomal protein uL10 family. Part of the 50S ribosomal subunit.

The chain is Large ribosomal subunit protein uL10 (rplJ) from Deinococcus radiodurans (strain ATCC 13939 / DSM 20539 / JCM 16871 / CCUG 27074 / LMG 4051 / NBRC 15346 / NCIMB 9279 / VKM B-1422 / R1).